Consider the following 172-residue polypeptide: Large ribosomal subunit protein uL10 (172 aa).

Belongs to the universal ribosomal protein uL10 family. In terms of assembly, part of the ribosomal stalk of the 50S ribosomal subunit. The N-terminus interacts with L11 and the large rRNA to form the base of the stalk. The C-terminus forms an elongated spine to which L12 dimers bind in a sequential fashion forming a multimeric L10(L12)X complex.

Forms part of the ribosomal stalk, playing a central role in the interaction of the ribosome with GTP-bound translation factors. The protein is Large ribosomal subunit protein uL10 of Pelodictyon phaeoclathratiforme (strain DSM 5477 / BU-1).